The chain runs to 458 residues: MNKFAIVLAAGKGTRMKSALPKVLHQVAGKSMLAHVLKSVSEVEIAKNVVIVGHEADRVIATLPKGTQFVKQVEQLGTGHAVRIAADLLANEEGATLVIAGDTPLITGETLGALFDYHFAQKATATILTAIAPNPTGYGRIIRDEKGSVEKIVEQKDANDFEKSITEINTGTYIFDNKSLFKALTEITTDNAQGEYYLTDVIEIFKKAGQTIAAHILDDFDESLGVNDRVALSQAEGTMRKRINHEHMVNGVTLIDPATTYIDSEVTIGAETVIEANVTIKGNTFIGKNVLITNGSRIENSEIHSNCEVRNSTVEESRMSVGSNVGPYAHLRPGTVLSEEVHVGNFVEIKGSTLGKGTKAGHLTYIGNATVGEKVNFGAGTITANFDGKNKFNTEIDDFAFIGSNSTIIAPLHIGKNALTAAGSVVTEDVPDEAVEIGRGKQVNKLGRAKKMPHYRGQ.

A pyrophosphorylase region spans residues 1–229 (MNKFAIVLAA…FDESLGVNDR (229 aa)). Residues 8 to 11 (LAAG), K22, Q72, and 77 to 78 (GT) contribute to the UDP-N-acetyl-alpha-D-glucosamine site. Residue D102 coordinates Mg(2+). Residues G139, E154, N169, and N227 each coordinate UDP-N-acetyl-alpha-D-glucosamine. Residue N227 participates in Mg(2+) binding. Residues 230–250 (VALSQAEGTMRKRINHEHMVN) form a linker region. Positions 251-458 (GVTLIDPATT…AKKMPHYRGQ (208 aa)) are N-acetyltransferase. UDP-N-acetyl-alpha-D-glucosamine is bound by residues R332 and K350. H362 functions as the Proton acceptor in the catalytic mechanism. UDP-N-acetyl-alpha-D-glucosamine contacts are provided by Y365 and N376. A379, S404, A422, and R439 together coordinate acetyl-CoA.

It in the N-terminal section; belongs to the N-acetylglucosamine-1-phosphate uridyltransferase family. This sequence in the C-terminal section; belongs to the transferase hexapeptide repeat family. Homotrimer. Mg(2+) serves as cofactor.

It localises to the cytoplasm. The catalysed reaction is alpha-D-glucosamine 1-phosphate + acetyl-CoA = N-acetyl-alpha-D-glucosamine 1-phosphate + CoA + H(+). It catalyses the reaction N-acetyl-alpha-D-glucosamine 1-phosphate + UTP + H(+) = UDP-N-acetyl-alpha-D-glucosamine + diphosphate. Its pathway is nucleotide-sugar biosynthesis; UDP-N-acetyl-alpha-D-glucosamine biosynthesis; N-acetyl-alpha-D-glucosamine 1-phosphate from alpha-D-glucosamine 6-phosphate (route II): step 2/2. It participates in nucleotide-sugar biosynthesis; UDP-N-acetyl-alpha-D-glucosamine biosynthesis; UDP-N-acetyl-alpha-D-glucosamine from N-acetyl-alpha-D-glucosamine 1-phosphate: step 1/1. It functions in the pathway bacterial outer membrane biogenesis; LPS lipid A biosynthesis. In terms of biological role, catalyzes the last two sequential reactions in the de novo biosynthetic pathway for UDP-N-acetylglucosamine (UDP-GlcNAc). The C-terminal domain catalyzes the transfer of acetyl group from acetyl coenzyme A to glucosamine-1-phosphate (GlcN-1-P) to produce N-acetylglucosamine-1-phosphate (GlcNAc-1-P), which is converted into UDP-GlcNAc by the transfer of uridine 5-monophosphate (from uridine 5-triphosphate), a reaction catalyzed by the N-terminal domain. This is Bifunctional protein GlmU from Lactococcus lactis subsp. cremoris (strain SK11).